The following is a 723-amino-acid chain: Malate synthase G (723 aa).

Acetyl-CoA contacts are provided by residues Val118, 125–126, Ser274, and Arg311; that span reads RY. Arg338 (proton acceptor) is an active-site residue. Glyoxylate contacts are provided by residues Arg338, Glu427, and 452–455; that span reads GFLD. Mg(2+) is bound by residues Glu427 and Asp455. Pro536 serves as a coordination point for acetyl-CoA. A Cysteine sulfenic acid (-SOH) modification is found at Cys617. The Proton donor role is filled by Asp631. Cysteine sulfenic acid (-SOH) is present on Cys688.

It belongs to the malate synthase family. GlcB subfamily. As to quaternary structure, monomer. Mg(2+) serves as cofactor.

It localises to the cytoplasm. It catalyses the reaction glyoxylate + acetyl-CoA + H2O = (S)-malate + CoA + H(+). The protein operates within carbohydrate metabolism; glyoxylate cycle; (S)-malate from isocitrate: step 2/2. In terms of biological role, involved in the glycolate utilization. Catalyzes the condensation and subsequent hydrolysis of acetyl-coenzyme A (acetyl-CoA) and glyoxylate to form malate and CoA. The sequence is that of Malate synthase G from Escherichia coli O6:H1 (strain CFT073 / ATCC 700928 / UPEC).